The primary structure comprises 232 residues: Large ribosomal subunit protein uL1 (232 aa).

This sequence belongs to the universal ribosomal protein uL1 family. Part of the 50S ribosomal subunit.

In terms of biological role, binds directly to 23S rRNA. The L1 stalk is quite mobile in the ribosome, and is involved in E site tRNA release. Protein L1 is also a translational repressor protein, it controls the translation of the L11 operon by binding to its mRNA. The polypeptide is Large ribosomal subunit protein uL1 (Maricaulis maris (strain MCS10) (Caulobacter maris)).